The chain runs to 723 residues: Nuclear intron maturase 3, mitochondrial (723 aa).

Residues 1–26 constitute a mitochondrion transit peptide; the sequence is MVLRLRVHSFYNRGISFLVSSSLRNL. An intron maturase type-2; degenerate region spans residues 532 to 597; it reads VSAPEELVRK…HYTKDLRVSD (66 aa). Residues 646-700 form a THAP-type zinc finger; the sequence is CAASFCERSDTIMHRVHLLQNRLHINPLDEEKWVPGMGTIHSALNRKCLPLCSTH.

This sequence belongs to the plant nuclear intron maturase (nMat) family.

The protein resides in the mitochondrion. In terms of biological role, nuclear-encoded maturase required for splicing of group-II introns in mitochondria. Necessary for mitochondrial biogenesis during early developmental stages. The chain is Nuclear intron maturase 3, mitochondrial from Arabidopsis thaliana (Mouse-ear cress).